We begin with the raw amino-acid sequence, 468 residues long: 6-phospho-beta-galactosidase (468 aa).

The D-galactose 6-phosphate site is built by Q19, H116, N159, E160, and N297. Catalysis depends on E160, which acts as the Proton donor. The active-site Nucleophile is E375. Residues S428, W429, K435, and Y437 each coordinate D-galactose 6-phosphate.

Belongs to the glycosyl hydrolase 1 family.

The enzyme catalyses a 6-phospho-beta-D-galactoside + H2O = D-galactose 6-phosphate + an alcohol. It participates in carbohydrate metabolism; lactose degradation; D-galactose 6-phosphate and beta-D-glucose from lactose 6-phosphate: step 1/1. The polypeptide is 6-phospho-beta-galactosidase (Lactococcus lactis subsp. lactis (Streptococcus lactis)).